The chain runs to 125 residues: UPF0734 protein DDB_G0273871/DDB_G0273177 (125 aa).

It belongs to the UPF0734 family.

This chain is UPF0734 protein DDB_G0273871/DDB_G0273177, found in Dictyostelium discoideum (Social amoeba).